A 440-amino-acid polypeptide reads, in one-letter code: Chromosomal replication initiator protein DnaA (440 aa).

A domain I, interacts with DnaA modulators region spans residues 1-69; sequence MKERILQEIK…VKVVLGNDAT (69 aa). The tract at residues 69 to 96 is domain II; sequence TFEITYEAFEPHSSYSEPLVKKRAVLLT. The tract at residues 97–313 is domain III, AAA+ region; sequence PLNPDYTFEN…GAIIKLLVYK (217 aa). ATP-binding residues include G140, G142, K143, and T144. Residues 314 to 440 form a domain IV, binds dsDNA region; the sequence is ETTGKEVDLR…GEISKRALSG (127 aa).

It belongs to the DnaA family. Oligomerizes as a right-handed, spiral filament on DNA at oriC.

The protein resides in the cytoplasm. Its function is as follows. Plays an essential role in the initiation and regulation of chromosomal replication. ATP-DnaA binds to the origin of replication (oriC) to initiate formation of the DNA replication initiation complex once per cell cycle. Binds the DnaA box (a 9 base pair repeat at the origin) and separates the double-stranded (ds)DNA. Forms a right-handed helical filament on oriC DNA; dsDNA binds to the exterior of the filament while single-stranded (ss)DNA is stabiized in the filament's interior. The ATP-DnaA-oriC complex binds and stabilizes one strand of the AT-rich DNA unwinding element (DUE), permitting loading of DNA polymerase. After initiation quickly degrades to an ADP-DnaA complex that is not apt for DNA replication. Binds acidic phospholipids. The protein is Chromosomal replication initiator protein DnaA of Thermotoga petrophila (strain ATCC BAA-488 / DSM 13995 / JCM 10881 / RKU-1).